We begin with the raw amino-acid sequence, 112 residues long: HTH-type transcriptional regulator YodB (112 aa).

Positions 6-105 (CPKMESAFSL…WADQFCEPGD (100 aa)) constitute an HTH hxlR-type domain.

Its function is as follows. Negatively regulates yodC and azoR1 which may contribute to the degradation of aromatic compounds. Probably positively regulates the catechol-specific transcription of mhqNOP, mhqED, and mhqA. The chain is HTH-type transcriptional regulator YodB (yodB) from Bacillus subtilis (strain 168).